The primary structure comprises 369 residues: Anhydro-N-acetylmuramic acid kinase (369 aa).

12–19 is a binding site for ATP; that stretch reads GTSLDGVD.

It belongs to the anhydro-N-acetylmuramic acid kinase family.

The catalysed reaction is 1,6-anhydro-N-acetyl-beta-muramate + ATP + H2O = N-acetyl-D-muramate 6-phosphate + ADP + H(+). Its pathway is amino-sugar metabolism; 1,6-anhydro-N-acetylmuramate degradation. It participates in cell wall biogenesis; peptidoglycan recycling. Catalyzes the specific phosphorylation of 1,6-anhydro-N-acetylmuramic acid (anhMurNAc) with the simultaneous cleavage of the 1,6-anhydro ring, generating MurNAc-6-P. Is required for the utilization of anhMurNAc either imported from the medium or derived from its own cell wall murein, and thus plays a role in cell wall recycling. This Escherichia coli (strain K12 / MC4100 / BW2952) protein is Anhydro-N-acetylmuramic acid kinase.